Reading from the N-terminus, the 539-residue chain is uncharacterized protein (539 aa).

This sequence belongs to the transposase 25 family.

This is an uncharacterized protein from Sinorhizobium fredii (strain NBRC 101917 / NGR234).